A 260-amino-acid polypeptide reads, in one-letter code: Diphthine synthase (260 aa).

S-adenosyl-L-methionine contacts are provided by residues leucine 9, aspartate 85, isoleucine 88, 113–114 (TA), leucine 168, alanine 202, and histidine 227.

The protein belongs to the diphthine synthase family. In terms of assembly, homodimer.

The enzyme catalyses 2-[(3S)-amino-3-carboxypropyl]-L-histidyl-[translation elongation factor 2] + 3 S-adenosyl-L-methionine = diphthine-[translation elongation factor 2] + 3 S-adenosyl-L-homocysteine + 3 H(+). The protein operates within protein modification; peptidyl-diphthamide biosynthesis. Its function is as follows. S-adenosyl-L-methionine-dependent methyltransferase that catalyzes the trimethylation of the amino group of the modified target histidine residue in translation elongation factor 2 (EF-2), to form an intermediate called diphthine. The three successive methylation reactions represent the second step of diphthamide biosynthesis. The polypeptide is Diphthine synthase (Haloquadratum walsbyi (strain DSM 16790 / HBSQ001)).